A 247-amino-acid polypeptide reads, in one-letter code: Probable transcriptional regulatory protein lpp1249 (247 aa).

This sequence belongs to the TACO1 family.

It is found in the cytoplasm. In Legionella pneumophila (strain Paris), this protein is Probable transcriptional regulatory protein lpp1249.